A 151-amino-acid polypeptide reads, in one-letter code: RNA polymerase-binding transcription factor DksA (151 aa).

Zn(2+) is bound by residues C114, C117, C135, and C138. Residues C114–C138 form a dksA C4-type zinc finger.

The protein belongs to the DksA family. As to quaternary structure, interacts directly with the RNA polymerase.

It is found in the cytoplasm. Its function is as follows. Transcription factor that acts by binding directly to the RNA polymerase (RNAP). Required for negative regulation of rRNA expression and positive regulation of several amino acid biosynthesis promoters. Also required for regulation of fis expression. This Buchnera aphidicola subsp. Acyrthosiphon pisum (strain APS) (Acyrthosiphon pisum symbiotic bacterium) protein is RNA polymerase-binding transcription factor DksA.